A 211-amino-acid polypeptide reads, in one-letter code: Glutathione S-transferase class-mu 28 kDa isozyme (211 aa).

The 83-residue stretch at 4–86 (DHIKVIYFNG…YMAKKHHMMG (83 aa)) folds into the GST N-terminal domain. 8 residues coordinate glutathione: Tyr10, Arg16, Trp41, Lys45, Leu53, Glu70, Ser71, and Asp104. In terms of domain architecture, GST C-terminal spans 88 to 211 (TEEEYYNVEK…YLSDRAATPF (124 aa)).

The protein belongs to the GST superfamily. Mu family. As to quaternary structure, homodimer.

The catalysed reaction is RX + glutathione = an S-substituted glutathione + a halide anion + H(+). Functionally, conjugation of reduced glutathione to a wide number of exogenous and endogenous hydrophobic electrophiles. Its function is as follows. GST isoenzymes appear to play a central role in the parasite detoxification system. Other functions are also suspected including a role in increasing the solubility of haematin in the parasite gut. The polypeptide is Glutathione S-transferase class-mu 28 kDa isozyme (Schistosoma haematobium (Blood fluke)).